A 252-amino-acid chain; its full sequence is Serine/threonine phosphatase stp (252 aa).

The segment covering 1–18 (MHAEFRTDRGRIRHHNED) has biased composition (basic and acidic residues). Residues 1-23 (MHAEFRTDRGRIRHHNEDNGGVF) form a disordered region. The PPM-type phosphatase domain maps to 2-242 (HAEFRTDRGR…DNITVLLVER (241 aa)). 4 residues coordinate Mn(2+): aspartate 36, glycine 37, aspartate 194, and aspartate 233.

This sequence belongs to the PP2C family. Mn(2+) is required as a cofactor.

The protein localises to the cytoplasm. It localises to the membrane. It carries out the reaction O-phospho-L-seryl-[protein] + H2O = L-seryl-[protein] + phosphate. It catalyses the reaction O-phospho-L-threonyl-[protein] + H2O = L-threonyl-[protein] + phosphate. Activity not affected by inhibitors of phosphatases of the PPP family such as okadaic acid and cypermethrin, or by inhibitors of phosphatases of the PTP family such as sodium orthovanadate. Protein phosphatase that dephosphorylates EF-Tu. The chain is Serine/threonine phosphatase stp (stp) from Listeria monocytogenes serovar 1/2a (strain ATCC BAA-679 / EGD-e).